The following is a 635-amino-acid chain: MINISFPDGSVKQFAQNITAFEIANAISMSLAKAAMVVEINGEFKDLSTVIEHDCKLRILTAKDYECLEIIRHDAAHLTAAAVKELFPETQVAIGPAIENGYYYDFARDKPFSRDDLATIEAKMQELVKKNEKITRELWDRDKAIEFFLSIGEHYKAKIIASIPAGEQITLYRQGNFIDLCRGPHAPSTGFVKYFKLMKVAGAYWRGNSRNEMLQRIYGTAWATKEQLDNYLFMLEEAEKRDHRKIGKELDLFHFQEEAQGMVFWHDKGWSIYNTIEQYIRKKNRKNGYIEVKTPVLVDKSLWEASGHWAKFRCDMFTLETDDKILALKPMNCPCHVQIFKQGIKSYRDLPLRMSEFGLCHRNEASGALHGLMRVRSLVQDDAHIFCAEEQITDETVRFCKLLTEVYKDFGFTDIKVKFSDRPEIRAGNDEVWDKAEHALKTAVEKVGFIYTLNPGDGAFYGPKLEFVLTDAIGRQWQCGTLQMDFVLPERLDANYIAASGEKKRPVMLHRAILGSLERFIGILIEEYAGKFPIWLAPVQVAIATITNDLNDYALEVQKTLIDNNIRTDINISPDKINYKIREFSNQKIPMIAVIGKKEQANKQVTIRKFGTTGQEILSIEQLIAMIKKENSNYL.

Residues 1–61 (MINISFPDGS…EHDCKLRILT (61 aa)) form the TGS domain. The segment at 242–533 (DHRKIGKELD…LIEEYAGKFP (292 aa)) is catalytic. Zn(2+) contacts are provided by cysteine 333, histidine 384, and histidine 510.

It belongs to the class-II aminoacyl-tRNA synthetase family. In terms of assembly, homodimer. The cofactor is Zn(2+).

The protein localises to the cytoplasm. It carries out the reaction tRNA(Thr) + L-threonine + ATP = L-threonyl-tRNA(Thr) + AMP + diphosphate + H(+). Functionally, catalyzes the attachment of threonine to tRNA(Thr) in a two-step reaction: L-threonine is first activated by ATP to form Thr-AMP and then transferred to the acceptor end of tRNA(Thr). Also edits incorrectly charged L-seryl-tRNA(Thr). The protein is Threonine--tRNA ligase of Rickettsia typhi (strain ATCC VR-144 / Wilmington).